The following is a 2273-amino-acid chain: Acetyl-CoA carboxylase, mitochondrial (2273 aa).

The transit peptide at 1-104 directs the protein to the mitochondrion; it reads KGKTITHGQS…RGNIHKHTRL (104 aa). One can recognise a Biotin carboxylation domain in the interval 134–635; that stretch reads VISKILIANN…STGWLDDLIL (502 aa). One can recognise an ATP-grasp domain in the interval 292-484; sequence KTNFVSVPDD…LPATQLQIAM (193 aa). 332 to 337 lines the ATP pocket; the sequence is GGGGKG. Arg459 is an active-site residue. The Biotinyl-binding domain maps to 763 to 837; the sequence is LEAELNPTQV…EAGDVIAKLT (75 aa). Lys804 carries the N6-biotinyllysine modification. Positions 1532–1867 constitute a CoA carboxyltransferase N-terminal domain; it reads PYSVKDWLQP…KRDMSPPLLE (336 aa). The tract at residues 1532 to 2187 is carboxyltransferase; sequence PYSVKDWLQP…EGQVIKRLQK (656 aa). Residues Arg1776, Lys2080, and Arg2082 each contribute to the CoA site. One can recognise a CoA carboxyltransferase C-terminal domain in the interval 1871–2187; the sequence is RWDRDVDFKP…EGQVIKRLQK (317 aa).

Biotin is required as a cofactor.

The protein localises to the mitochondrion. The enzyme catalyses hydrogencarbonate + acetyl-CoA + ATP = malonyl-CoA + ADP + phosphate + H(+). It catalyses the reaction N(6)-biotinyl-L-lysyl-[protein] + hydrogencarbonate + ATP = N(6)-carboxybiotinyl-L-lysyl-[protein] + ADP + phosphate + H(+). It participates in lipid metabolism; malonyl-CoA biosynthesis; malonyl-CoA from acetyl-CoA: step 1/1. In terms of biological role, catalyzes the rate-limiting reaction in the mitochondrial fatty acid synthesis (FAS) type II pathway. Responsible for the production of the mitochondrial malonyl-CoA, used for the biosynthesis of the cofactor lipoic acid. This protein carries three functions: biotin carboxyl carrier protein, biotin carboxylase, and carboxyltransferase. The polypeptide is Acetyl-CoA carboxylase, mitochondrial (HFA1) (Saccharomyces cerevisiae (strain Lalvin EC1118 / Prise de mousse) (Baker's yeast)).